Consider the following 375-residue polypeptide: uncharacterized protein (375 aa).

The signal sequence occupies residues 1-20 (MKNKLFIILIIFIILKIVIC). Residues 21-335 (QNTTPSKLIP…EKQVERKITP (315 aa)) are Extracellular-facing. A compositionally biased stretch (low complexity) spans 30-42 (PQQQQKQKQQQTQ). Disordered regions lie at residues 30 to 74 (PQQQ…QPQQ) and 113 to 253 (SQNV…PHNH). The segment covering 43 to 53 (PHHHHHHHQQH) has biased composition (basic residues). Residues 54 to 74 (QQHQQQHQPNQQIKQQQQPQQ) show a composition bias toward low complexity. The span at 120–151 (PPHHTQQRVPHHHGPNGAPHHHGPNGAPHHHG) shows a compositional bias: basic residues. Polar residues predominate over residues 168-180 (GHNTQGHVQTNHV). The segment covering 181–220 (NNINKNNINNNNNNNNNNNNNNNNNNNNNINDNKNIRNNI) has biased composition (low complexity). A helical transmembrane segment spans residues 336–356 (IMVLYILLASTMVIQLFIMVF). The Cytoplasmic segment spans residues 357–375 (KQVKHIREINAKTTMESLL).

The protein resides in the membrane. This is an uncharacterized protein from Dictyostelium discoideum (Social amoeba).